Here is an 81-residue protein sequence, read N- to C-terminus: Putative membrane protein insertion efficiency factor (81 aa).

Belongs to the UPF0161 family.

The protein localises to the cell membrane. In terms of biological role, could be involved in insertion of integral membrane proteins into the membrane. The chain is Putative membrane protein insertion efficiency factor from Geobacillus kaustophilus (strain HTA426).